The following is a 194-amino-acid chain: Probable proteasome subunit beta type-4 (194 aa).

Belongs to the peptidase T1B family. As to quaternary structure, the 26S proteasome consists of a 20S proteasome core and two 19S regulatory subunits. The 20S proteasome core is composed of 28 subunits that are arranged in four stacked rings, resulting in a barrel-shaped structure. The two end rings are each formed by seven alpha subunits, and the two central rings are each formed by seven beta subunits. The catalytic chamber with the active sites is on the inside of the barrel.

The protein resides in the cytoplasm. The protein localises to the nucleus. In terms of biological role, non-catalytic component of the proteasome, a multicatalytic proteinase complex which is characterized by its ability to cleave peptides with Arg, Phe, Tyr, Leu, and Glu adjacent to the leaving group at neutral or slightly basic pH. The proteasome has an ATP-dependent proteolytic activity. The chain is Probable proteasome subunit beta type-4 from Schizosaccharomyces pombe (strain 972 / ATCC 24843) (Fission yeast).